The chain runs to 272 residues: 3-methyl-2-oxobutanoate hydroxymethyltransferase (272 aa).

Asp43 and Asp82 together coordinate Mg(2+). 3-methyl-2-oxobutanoate is bound by residues 43–44 (DS), Asp82, and Lys112. Glu114 is a Mg(2+) binding site. Glu179 serves as the catalytic Proton acceptor.

It belongs to the PanB family. As to quaternary structure, homodecamer; pentamer of dimers. Requires Mg(2+) as cofactor.

The protein resides in the cytoplasm. The enzyme catalyses 3-methyl-2-oxobutanoate + (6R)-5,10-methylene-5,6,7,8-tetrahydrofolate + H2O = 2-dehydropantoate + (6S)-5,6,7,8-tetrahydrofolate. It functions in the pathway cofactor biosynthesis; (R)-pantothenate biosynthesis; (R)-pantoate from 3-methyl-2-oxobutanoate: step 1/2. Functionally, catalyzes the reversible reaction in which hydroxymethyl group from 5,10-methylenetetrahydrofolate is transferred onto alpha-ketoisovalerate to form ketopantoate. The protein is 3-methyl-2-oxobutanoate hydroxymethyltransferase of Staphylococcus aureus (strain Mu3 / ATCC 700698).